Reading from the N-terminus, the 104-residue chain is Large ribosomal subunit protein bL21 (104 aa).

Belongs to the bacterial ribosomal protein bL21 family. In terms of assembly, part of the 50S ribosomal subunit. Contacts protein L20.

Its function is as follows. This protein binds to 23S rRNA in the presence of protein L20. This Streptococcus pyogenes serotype M1 protein is Large ribosomal subunit protein bL21.